A 122-amino-acid polypeptide reads, in one-letter code: Large ribosomal subunit protein uL24 (122 aa).

Belongs to the universal ribosomal protein uL24 family. Part of the 50S ribosomal subunit.

Functionally, one of two assembly initiator proteins, it binds directly to the 5'-end of the 23S rRNA, where it nucleates assembly of the 50S subunit. Its function is as follows. One of the proteins that surrounds the polypeptide exit tunnel on the outside of the subunit. This Trichodesmium erythraeum (strain IMS101) protein is Large ribosomal subunit protein uL24.